We begin with the raw amino-acid sequence, 441 residues long: UPF0761 membrane protein Clim_1521 (441 aa).

The next 6 membrane-spanning stretches (helical) occupy residues 54–74 (IFLS…PFLA), 122–142 (TVPL…ISTI), 161–181 (AFTL…SSLG), 203–223 (LISF…YMLV), 233–253 (AFSG…WFVF), and 266–286 (GAIS…LVVL).

Belongs to the UPF0761 family.

It localises to the cell inner membrane. This chain is UPF0761 membrane protein Clim_1521, found in Chlorobium limicola (strain DSM 245 / NBRC 103803 / 6330).